Here is a 159-residue protein sequence, read N- to C-terminus: Glucosamine 6-phosphate N-acetyltransferase (159 aa).

Residue Ser-2 is modified to N-acetylserine. D-glucosamine 6-phosphate contacts are provided by residues Thr-28, 86–89, and 98–100; these read KIIH and EDI. The 132-residue stretch at 28–159 folds into the N-acetyltransferase domain; that stretch reads TTVGTITPES…NAGVEMQIRK (132 aa). Acetyl-CoA contacts are provided by residues 100–102 and 108–113; these read IAV and GQGLGK. D-glucosamine 6-phosphate is bound by residues 129-130 and Asp-134; that span reads YK. Residue 143–145 coordinates acetyl-CoA; the sequence is YEK. D-glucosamine 6-phosphate is bound at residue Arg-158.

It belongs to the acetyltransferase family. GNA1 subfamily. Homodimer.

The catalysed reaction is D-glucosamine 6-phosphate + acetyl-CoA = N-acetyl-D-glucosamine 6-phosphate + CoA + H(+). Its pathway is nucleotide-sugar biosynthesis; UDP-N-acetyl-alpha-D-glucosamine biosynthesis; N-acetyl-alpha-D-glucosamine 1-phosphate from alpha-D-glucosamine 6-phosphate (route I): step 1/2. This Saccharomyces cerevisiae (strain ATCC 204508 / S288c) (Baker's yeast) protein is Glucosamine 6-phosphate N-acetyltransferase (GNA1).